A 208-amino-acid polypeptide reads, in one-letter code: Protein-L-isoaspartate O-methyltransferase (208 aa).

Serine 59 is an active-site residue.

The protein belongs to the methyltransferase superfamily. L-isoaspartyl/D-aspartyl protein methyltransferase family.

The protein localises to the cytoplasm. It catalyses the reaction [protein]-L-isoaspartate + S-adenosyl-L-methionine = [protein]-L-isoaspartate alpha-methyl ester + S-adenosyl-L-homocysteine. Catalyzes the methyl esterification of L-isoaspartyl residues in peptides and proteins that result from spontaneous decomposition of normal L-aspartyl and L-asparaginyl residues. It plays a role in the repair and/or degradation of damaged proteins. The chain is Protein-L-isoaspartate O-methyltransferase from Klebsiella pneumoniae subsp. pneumoniae (strain ATCC 700721 / MGH 78578).